We begin with the raw amino-acid sequence, 428 residues long: Trigger factor (428 aa).

In terms of domain architecture, PPIase FKBP-type spans Gly163–Pro248.

It belongs to the FKBP-type PPIase family. Tig subfamily.

The protein resides in the cytoplasm. The catalysed reaction is [protein]-peptidylproline (omega=180) = [protein]-peptidylproline (omega=0). Functionally, involved in protein export. Acts as a chaperone by maintaining the newly synthesized protein in an open conformation. Functions as a peptidyl-prolyl cis-trans isomerase. This is Trigger factor from Geobacillus kaustophilus (strain HTA426).